A 358-amino-acid chain; its full sequence is Peptide chain release factor 1 (358 aa).

Residue glutamine 234 is modified to N5-methylglutamine.

It belongs to the prokaryotic/mitochondrial release factor family. In terms of processing, methylated by PrmC. Methylation increases the termination efficiency of RF1.

The protein localises to the cytoplasm. Peptide chain release factor 1 directs the termination of translation in response to the peptide chain termination codons UAG and UAA. In Chloroherpeton thalassium (strain ATCC 35110 / GB-78), this protein is Peptide chain release factor 1.